Consider the following 334-residue polypeptide: Transcription factor TGA2.1 (334 aa).

The span at 1–13 (MADASSRTDTSIV) shows a compositional bias: polar residues. The tract at residues 1–49 (MADASSRTDTSIVVDNDDKNHQLENGHSGAVMASNSSDRSDRSDKLMDQ) is disordered. The segment covering 38 to 49 (DRSDRSDKLMDQ) has biased composition (basic and acidic residues). The bZIP domain occupies 48–92 (DQKTIRRLAQNREAARKSRLRKKAYVQQLESSKLKLAQLEQELQK). Positions 50-70 (KTIRRLAQNREAARKSRLRKK) are basic motif. Residues 76 to 90 (LESSKLKLAQLEQEL) are leucine-zipper. Positions 115 to 331 (ALTFDLEYTR…RALSSLWLAR (217 aa)) constitute a DOG1 domain.

It belongs to the bZIP family. In terms of assembly, interacts with NPR1/NH1 and NPR3/NH3.

It is found in the nucleus. Its function is as follows. Plays a negative role in rice basal defense responses to the bacterial blight pathogen Xanthomomas oryzae pv. oryzae (Xoo). May function in both positive and negative regulation of rice defense genes. Binds DNA in vitro. Acts as a transcriptional activator when bound to NPR1/NH1 in vitro. Binds to the promoter sequence of CRK10 in vitro. The polypeptide is Transcription factor TGA2.1 (Oryza sativa subsp. japonica (Rice)).